Consider the following 364-residue polypeptide: CLIP domain-containing serine protease B15 (364 aa).

The signal sequence occupies residues 1 to 19; sequence MRWLVCLIVSWCSLVPLGA. One can recognise a Clip domain in the interval 30-89; it reads PCQTPSGTAGTCEPVKNCSYVRKILKSPDFSHYDTTYLDTLKCGDLMVPMRKKPIPLLCC. 3 cysteine pairs are disulfide-bonded: C31–C88, C41–C72, and C47–C89. N-linked (GlcNAc...) asparagine glycosylation is present at N46. One can recognise a Peptidase S1 domain in the interval 107–359; the sequence is IYFGEETERG…YLDWMETVMF (253 aa). N131 carries N-linked (GlcNAc...) asparagine glycosylation. The cysteines at positions 137 and 153 are disulfide-linked. The active-site Charge relay system is H152. N-linked (GlcNAc...) asparagine glycosylation is found at N171, N177, and N206. D212 functions as the Charge relay system in the catalytic mechanism. C279 and C296 are joined by a disulfide. 2 N-linked (GlcNAc...) asparagine glycosylation sites follow: N287 and N301. A disulfide bond links C306 and C335. The active-site Charge relay system is the S310.

This sequence belongs to the peptidase S1 family. CLIP subfamily. Post-translationally, N-glycosylated. In terms of processing, proteolytically cleaved. In terms of tissue distribution, expressed by a subpopulation of hemocytes.

Its subcellular location is the secreted. Serine protease. Plays a role in innate immunity against infections by parasite P.berghei and by Gram-negative bacteria such as E.coli. In response to P.berghei infection, contributes to the clearing of parasite ookinetes independent of melanization, an innate immune response which consists in the deposition of melanin pigments on invading pathogens and parasites. This Anopheles gambiae (African malaria mosquito) protein is CLIP domain-containing serine protease B15.